A 905-amino-acid chain; its full sequence is NADH-quinone oxidoreductase subunit G (905 aa).

A 2Fe-2S ferredoxin-type domain is found at 1 to 83 (MATIHVDGKT…NTWISIEDEE (83 aa)). [2Fe-2S] cluster-binding residues include cysteine 34, cysteine 45, cysteine 48, and cysteine 67. The 40-residue stretch at 83-122 (EAKQFRASVVEWLMTNHPHDCPVCEEGGHCHLQDMTVMTG) folds into the 4Fe-4S His(Cys)3-ligated-type domain. The [4Fe-4S] cluster site is built by histidine 99, cysteine 103, cysteine 106, cysteine 112, cysteine 151, cysteine 154, cysteine 157, cysteine 201, cysteine 228, cysteine 231, cysteine 235, and cysteine 263. The region spanning 221–277 (MQFAPSICHGCSSGCNISPGERYGEIRRIENRYNGSVNHYFLCDRGRFGYGYVNRED) is the 4Fe-4S Mo/W bis-MGD-type domain.

It belongs to the complex I 75 kDa subunit family. As to quaternary structure, composed of 13 different subunits. Subunits NuoCD, E, F, and G constitute the peripheral sector of the complex. The cofactor is [2Fe-2S] cluster. It depends on [4Fe-4S] cluster as a cofactor.

The enzyme catalyses a quinone + NADH + 5 H(+)(in) = a quinol + NAD(+) + 4 H(+)(out). In terms of biological role, NDH-1 shuttles electrons from NADH, via FMN and iron-sulfur (Fe-S) centers, to quinones in the respiratory chain. The immediate electron acceptor for the enzyme in this species is believed to be ubiquinone. Couples the redox reaction to proton translocation (for every two electrons transferred, four hydrogen ions are translocated across the cytoplasmic membrane), and thus conserves the redox energy in a proton gradient. The protein is NADH-quinone oxidoreductase subunit G (nuoG) of Pseudomonas aeruginosa (strain ATCC 15692 / DSM 22644 / CIP 104116 / JCM 14847 / LMG 12228 / 1C / PRS 101 / PAO1).